We begin with the raw amino-acid sequence, 89 residues long: Small ribosomal subunit protein uS15 (89 aa).

Over residues 1–21 (MSIAAERKAEVIKTNARKDGD) the composition is skewed to basic and acidic residues. The tract at residues 1–24 (MSIAAERKAEVIKTNARKDGDTGS) is disordered.

This sequence belongs to the universal ribosomal protein uS15 family. As to quaternary structure, part of the 30S ribosomal subunit. Forms a bridge to the 50S subunit in the 70S ribosome, contacting the 23S rRNA.

In terms of biological role, one of the primary rRNA binding proteins, it binds directly to 16S rRNA where it helps nucleate assembly of the platform of the 30S subunit by binding and bridging several RNA helices of the 16S rRNA. Forms an intersubunit bridge (bridge B4) with the 23S rRNA of the 50S subunit in the ribosome. This Rhodopseudomonas palustris (strain BisA53) protein is Small ribosomal subunit protein uS15.